The primary structure comprises 108 residues: Putative disulfide oxidoreductase YuzD (108 aa).

A disulfide bridge connects residues Cys-16 and Cys-19.

The protein is Putative disulfide oxidoreductase YuzD (yuzD) of Bacillus subtilis (strain 168).